The sequence spans 480 residues: tRNA (guanine(37)-N(1))-methyltransferase (480 aa).

Residues H244, 292 to 293 (DL), 321 to 322 (DG), and N342 each bind S-adenosyl-L-methionine.

The protein belongs to the class I-like SAM-binding methyltransferase superfamily. TRM5/TYW2 family. Monomer.

It is found in the mitochondrion matrix. It localises to the nucleus. The protein localises to the cytoplasm. It carries out the reaction guanosine(37) in tRNA + S-adenosyl-L-methionine = N(1)-methylguanosine(37) in tRNA + S-adenosyl-L-homocysteine + H(+). Its function is as follows. Specifically methylates the N1 position of guanosine-37 in various cytoplasmic and mitochondrial tRNAs. Methylation is not dependent on the nature of the nucleoside 5' of the target nucleoside. This is the first step in the biosynthesis of wybutosine (yW), a modified base adjacent to the anticodon of tRNAs and required for accurate decoding. The protein is tRNA (guanine(37)-N(1))-methyltransferase of Thalassiosira pseudonana (Marine diatom).